The following is a 405-amino-acid chain: Secreted aspartic protease 8 (405 aa).

The first 25 residues, 1-25 (MVSIITFTKNVLVTLAFALLAQGLA), serve as a signal peptide directing secretion. An N-linked (GlcNAc...) asparagine glycan is attached at asparagine 50. Positions 52–78 (TAHGQHHQSQQQQQQQQQQPAQKRGTV) are disordered. Low complexity predominate over residues 58–70 (HQSQQQQQQQQQQ). The 304-residue stretch at 89–392 (YAATITVGSN…DLDGNTISLA (304 aa)) folds into the Peptidase A1 domain. Aspartate 107 is an active-site residue. 107-109 (DTG) is a binding site for pepstatin A. Cysteine 122 and cysteine 134 form a disulfide bridge. Aspartate 292 is a catalytic residue. Residue 292 to 296 (DSGTT) coordinates pepstatin A. Cysteine 327 and cysteine 358 form a disulfide bridge.

Belongs to the peptidase A1 family. In terms of assembly, monomer.

The protein resides in the secreted. It carries out the reaction Preferential cleavage at the carboxyl of hydrophobic amino acids, but fails to cleave 15-Leu-|-Tyr-16, 16-Tyr-|-Leu-17 and 24-Phe-|-Phe-25 of insulin B chain. Activates trypsinogen, and degrades keratin.. Its function is as follows. Secreted aspartic peptidases (SAPs) are a group of ten acidic hydrolases considered as key virulence factors. These enzymes supply the fungus with nutrient amino acids as well as are able to degrade the selected host's proteins involved in the immune defense. Moreover, acts toward human hemoglobin though limited proteolysis to generate a variety of antimicrobial hemocidins, enabling to compete with the other microorganisms of the same physiological niche using the microbicidal peptides generated from the host protein. Functionally, plays a key role in defense against host by cleaving histatin-5 (Hst 5), a peptide from human saliva that carries out fungicidal activity. The cleavage rate decreases in an order of SAP2 &gt; SAP9 &gt; SAP3 &gt; SAP7 &gt; SAP4 &gt; SAP1 &gt; SAP8. The hydrolysis of Hst 5 by SAP8 causes production of the DSHAKRHHGY, HHSHRGY and FHEKHHSHRGY peptides. The sequence is that of Secreted aspartic protease 8 from Candida albicans (Yeast).